The sequence spans 809 residues: Glutamine--tRNA ligase (809 aa).

The span at 185 to 198 (DLIKKKTKNNEKKK) shows a compositional bias: basic and acidic residues. A disordered region spans residues 185–216 (DLIKKKTKNNEKKKTNSAKKSSDNSASSGPKR). The 'HIGH' region motif lies at 258–268 (PEPNGYLHIGH). Residues 259 to 261 (EPN) and 265 to 271 (HIGHSKA) each bind ATP. Position 291 (Asp291) interacts with L-glutamine. Ser378 is subject to Phosphoserine. Tyr440 contributes to the L-glutamine binding site. ATP-binding positions include Thr459, 488 to 489 (RL), and 496 to 498 (LSK). Residues 495–499 (VLSKR) carry the 'KMSKS' region motif.

The protein belongs to the class-I aminoacyl-tRNA synthetase family.

The enzyme catalyses tRNA(Gln) + L-glutamine + ATP = L-glutaminyl-tRNA(Gln) + AMP + diphosphate. The chain is Glutamine--tRNA ligase (GLN4) from Saccharomyces cerevisiae (strain ATCC 204508 / S288c) (Baker's yeast).